We begin with the raw amino-acid sequence, 117 residues long: Prefoldin subunit beta (117 aa).

It belongs to the prefoldin subunit beta family. Heterohexamer of two alpha and four beta subunits.

It is found in the cytoplasm. Molecular chaperone capable of stabilizing a range of proteins. Seems to fulfill an ATP-independent, HSP70-like function in archaeal de novo protein folding. This Thermococcus kodakarensis (strain ATCC BAA-918 / JCM 12380 / KOD1) (Pyrococcus kodakaraensis (strain KOD1)) protein is Prefoldin subunit beta.